The following is a 75-amino-acid chain: Endogenous retrovirus group K member 24 Np9 protein (75 aa).

A disordered region spans residues 22–43 (TAPKRQRPSRTGHDDDGGFVEK). Basic and acidic residues predominate over residues 32 to 43 (TGHDDDGGFVEK).

In terms of tissue distribution, transcript detectable in many tumor cell lines and tumor tissues.

Its subcellular location is the nucleus. Functionally, may possess a function in tumorigenesis. The protein is Endogenous retrovirus group K member 24 Np9 protein (ERVK-24) of Homo sapiens (Human).